Consider the following 392-residue polypeptide: S-adenosylmethionine synthase (392 aa).

His20 is an ATP binding site. A Mg(2+)-binding site is contributed by Asp22. Position 48 (Glu48) interacts with K(+). Residues Glu61 and Gln106 each contribute to the L-methionine site. The interval 106 to 116 (QSRDIINAIEK) is flexible loop. Residues 171–173 (DSK), Asp248, 254–255 (RK), Ala271, and Lys275 each bind ATP. Residue Asp248 coordinates L-methionine. Lys279 serves as a coordination point for L-methionine.

This sequence belongs to the AdoMet synthase family. In terms of assembly, homotetramer; dimer of dimers. It depends on Mg(2+) as a cofactor. Requires K(+) as cofactor.

Its subcellular location is the cytoplasm. The enzyme catalyses L-methionine + ATP + H2O = S-adenosyl-L-methionine + phosphate + diphosphate. The protein operates within amino-acid biosynthesis; S-adenosyl-L-methionine biosynthesis; S-adenosyl-L-methionine from L-methionine: step 1/1. Functionally, catalyzes the formation of S-adenosylmethionine (AdoMet) from methionine and ATP. The overall synthetic reaction is composed of two sequential steps, AdoMet formation and the subsequent tripolyphosphate hydrolysis which occurs prior to release of AdoMet from the enzyme. The chain is S-adenosylmethionine synthase from Borreliella burgdorferi (strain ATCC 35210 / DSM 4680 / CIP 102532 / B31) (Borrelia burgdorferi).